Here is a 96-residue protein sequence, read N- to C-terminus: uncharacterized protein (96 aa).

3 helical membrane-spanning segments follow: residues 2-22 (FIFNVLTIRCTFHVLFAICYF), 38-58 (AGLKIFLVFELAVTIFNTVML), and 68-88 (LTLAILIVSVVMFVYHQQLIV).

It localises to the membrane. This is an uncharacterized protein from Schizosaccharomyces pombe (strain 972 / ATCC 24843) (Fission yeast).